A 226-amino-acid polypeptide reads, in one-letter code: Cytidylate kinase (226 aa).

12 to 20 (GPSGAGKGT) is a binding site for ATP.

This sequence belongs to the cytidylate kinase family. Type 1 subfamily.

The protein resides in the cytoplasm. It catalyses the reaction CMP + ATP = CDP + ADP. The enzyme catalyses dCMP + ATP = dCDP + ADP. This chain is Cytidylate kinase, found in Vibrio parahaemolyticus serotype O3:K6 (strain RIMD 2210633).